Consider the following 107-residue polypeptide: Nucleoid-associated protein Lferr_1592 (107 aa).

Belongs to the YbaB/EbfC family. Homodimer.

It localises to the cytoplasm. Its subcellular location is the nucleoid. Functionally, binds to DNA and alters its conformation. May be involved in regulation of gene expression, nucleoid organization and DNA protection. This chain is Nucleoid-associated protein Lferr_1592, found in Acidithiobacillus ferrooxidans (strain ATCC 53993 / BNL-5-31) (Leptospirillum ferrooxidans (ATCC 53993)).